A 278-amino-acid polypeptide reads, in one-letter code: Phosphoenolpyruvate carboxylase kinase 2 (278 aa).

Positions Y11 to M269 constitute a Protein kinase domain. Residues I17–I25 and K40 contribute to the ATP site. The Proton acceptor role is filled by D137.

It belongs to the protein kinase superfamily. Ser/Thr protein kinase family. Expressed in flowers and roots, and at lower levels in cauline leaves. Barely detectable in rosette leaves and stems.

The enzyme catalyses L-seryl-[protein] + ATP = O-phospho-L-seryl-[protein] + ADP + H(+). It catalyses the reaction L-threonyl-[protein] + ATP = O-phospho-L-threonyl-[protein] + ADP + H(+). Calcium-independent kinase involved in light-dependent phosphoenolpyruvate carboxylase phosphorylation. This chain is Phosphoenolpyruvate carboxylase kinase 2 (PPCK2), found in Arabidopsis thaliana (Mouse-ear cress).